Here is a 245-residue protein sequence, read N- to C-terminus: 1-(5-phosphoribosyl)-5-[(5-phosphoribosylamino)methylideneamino] imidazole-4-carboxamide isomerase (245 aa).

Asp7 (proton acceptor) is an active-site residue. Residue Asp129 is the Proton donor of the active site.

The protein belongs to the HisA/HisF family.

The protein resides in the cytoplasm. It carries out the reaction 1-(5-phospho-beta-D-ribosyl)-5-[(5-phospho-beta-D-ribosylamino)methylideneamino]imidazole-4-carboxamide = 5-[(5-phospho-1-deoxy-D-ribulos-1-ylimino)methylamino]-1-(5-phospho-beta-D-ribosyl)imidazole-4-carboxamide. It participates in amino-acid biosynthesis; L-histidine biosynthesis; L-histidine from 5-phospho-alpha-D-ribose 1-diphosphate: step 4/9. This Aliivibrio fischeri (strain MJ11) (Vibrio fischeri) protein is 1-(5-phosphoribosyl)-5-[(5-phosphoribosylamino)methylideneamino] imidazole-4-carboxamide isomerase.